The chain runs to 286 residues: Beta-lactamase SHV-13 (286 aa).

A signal peptide spans 1–21 (MRYIRLCIISLLATLPLAVHA). The active-site Acyl-ester intermediate is S66. C73 and C119 are joined by a disulfide. E164 functions as the Proton acceptor in the catalytic mechanism. Position 230–232 (230–232 (KTG)) interacts with substrate.

It belongs to the class-A beta-lactamase family.

It catalyses the reaction a beta-lactam + H2O = a substituted beta-amino acid. With respect to regulation, inhibited 16-fold better by the beta-lactamase inhibitor clavulanic acid than by tazobactam. Broad spectrum beta-lactamase which hydrolyzes penicillins, as well as cephalosporins except cephamycins. Also hydrolyzes aztreonam, but not imipenem. Confers highly resistance to ceftazidime, cefotaxime, aztreonam and piperacillin. The chain is Beta-lactamase SHV-13 (bla) from Klebsiella pneumoniae.